A 407-amino-acid chain; its full sequence is tRNA (guanine(26)-N(2))-dimethyltransferase (407 aa).

The 391-residue stretch at 10 to 400 folds into the Trm1 methyltransferase domain; the sequence is AVTHEGRSII…APWGEVLEAV (391 aa). 4 residues coordinate S-adenosyl-L-methionine: R50, R82, D99, and E128.

This sequence belongs to the class I-like SAM-binding methyltransferase superfamily. Trm1 family.

The enzyme catalyses guanosine(26) in tRNA + 2 S-adenosyl-L-methionine = N(2)-dimethylguanosine(26) in tRNA + 2 S-adenosyl-L-homocysteine + 2 H(+). Dimethylates a single guanine residue at position 26 of a number of tRNAs using S-adenosyl-L-methionine as donor of the methyl groups. In Aeropyrum pernix (strain ATCC 700893 / DSM 11879 / JCM 9820 / NBRC 100138 / K1), this protein is tRNA (guanine(26)-N(2))-dimethyltransferase.